The chain runs to 264 residues: Acyl-[acyl-carrier-protein]--UDP-N-acetylglucosamine O-acyltransferase (264 aa).

The protein belongs to the transferase hexapeptide repeat family. LpxA subfamily. As to quaternary structure, homotrimer.

The protein resides in the cytoplasm. The catalysed reaction is a (3R)-hydroxyacyl-[ACP] + UDP-N-acetyl-alpha-D-glucosamine = a UDP-3-O-[(3R)-3-hydroxyacyl]-N-acetyl-alpha-D-glucosamine + holo-[ACP]. The protein operates within glycolipid biosynthesis; lipid IV(A) biosynthesis; lipid IV(A) from (3R)-3-hydroxytetradecanoyl-[acyl-carrier-protein] and UDP-N-acetyl-alpha-D-glucosamine: step 1/6. Its function is as follows. Involved in the biosynthesis of lipid A, a phosphorylated glycolipid that anchors the lipopolysaccharide to the outer membrane of the cell. This is Acyl-[acyl-carrier-protein]--UDP-N-acetylglucosamine O-acyltransferase from Rickettsia conorii (strain ATCC VR-613 / Malish 7).